Consider the following 447-residue polypeptide: tRNA-2-methylthio-N(6)-dimethylallyladenosine synthase (447 aa).

Positions 8-126 (KKVVTLAYGC…FQRLLEEAEE (119 aa)) constitute an MTTase N-terminal domain. [4Fe-4S] cluster is bound by residues cysteine 17, cysteine 53, cysteine 87, cysteine 162, cysteine 166, and cysteine 169. The 231-residue stretch at 148 to 378 (AKGKLKAYVN…ITVQNAQSLA (231 aa)) folds into the Radical SAM core domain. In terms of domain architecture, TRAM spans 381–444 (QEMIGKTCEV…SWTLFGECRA (64 aa)).

Belongs to the methylthiotransferase family. MiaB subfamily. Monomer. Requires [4Fe-4S] cluster as cofactor.

The protein resides in the cytoplasm. It carries out the reaction N(6)-dimethylallyladenosine(37) in tRNA + (sulfur carrier)-SH + AH2 + 2 S-adenosyl-L-methionine = 2-methylsulfanyl-N(6)-dimethylallyladenosine(37) in tRNA + (sulfur carrier)-H + 5'-deoxyadenosine + L-methionine + A + S-adenosyl-L-homocysteine + 2 H(+). In terms of biological role, catalyzes the methylthiolation of N6-(dimethylallyl)adenosine (i(6)A), leading to the formation of 2-methylthio-N6-(dimethylallyl)adenosine (ms(2)i(6)A) at position 37 in tRNAs that read codons beginning with uridine. The polypeptide is tRNA-2-methylthio-N(6)-dimethylallyladenosine synthase (Desulfitobacterium hafniense (strain Y51)).